Here is an 801-residue protein sequence, read N- to C-terminus: Phenylalanine--tRNA ligase beta subunit (801 aa).

The tRNA-binding domain occupies 39 to 154; the sequence is LKMPQKVVVG…GHLELGVELG (116 aa). The B5 domain maps to 398–475; it reads IDEITIKTTF…RIYGIDNVSS (78 aa). Residues Asp453, Asp459, Glu462, and Glu463 each contribute to the Mg(2+) site. An FDX-ACB domain is found at 708-800; that stretch reads SKYQKSTRDL…LVREFDAVLR (93 aa).

It belongs to the phenylalanyl-tRNA synthetase beta subunit family. Type 1 subfamily. Tetramer of two alpha and two beta subunits. The cofactor is Mg(2+).

It is found in the cytoplasm. It catalyses the reaction tRNA(Phe) + L-phenylalanine + ATP = L-phenylalanyl-tRNA(Phe) + AMP + diphosphate + H(+). The polypeptide is Phenylalanine--tRNA ligase beta subunit (Helicobacter hepaticus (strain ATCC 51449 / 3B1)).